Reading from the N-terminus, the 162-residue chain is 2-C-methyl-D-erythritol 2,4-cyclodiphosphate synthase (162 aa).

The a divalent metal cation site is built by D9 and H11. 4-CDP-2-C-methyl-D-erythritol 2-phosphate-binding positions include 9-11 (DVH) and 37-38 (HS). Position 45 (H45) interacts with a divalent metal cation.

Belongs to the IspF family. Homotrimer. It depends on a divalent metal cation as a cofactor.

It catalyses the reaction 4-CDP-2-C-methyl-D-erythritol 2-phosphate = 2-C-methyl-D-erythritol 2,4-cyclic diphosphate + CMP. It functions in the pathway isoprenoid biosynthesis; isopentenyl diphosphate biosynthesis via DXP pathway; isopentenyl diphosphate from 1-deoxy-D-xylulose 5-phosphate: step 4/6. Functionally, involved in the biosynthesis of isopentenyl diphosphate (IPP) and dimethylallyl diphosphate (DMAPP), two major building blocks of isoprenoid compounds. Catalyzes the conversion of 4-diphosphocytidyl-2-C-methyl-D-erythritol 2-phosphate (CDP-ME2P) to 2-C-methyl-D-erythritol 2,4-cyclodiphosphate (ME-CPP) with a corresponding release of cytidine 5-monophosphate (CMP). The polypeptide is 2-C-methyl-D-erythritol 2,4-cyclodiphosphate synthase (Petrotoga mobilis (strain DSM 10674 / SJ95)).